The primary structure comprises 394 residues: MKTYQVDKNGYYGEFGGAYVPEILHQCVENLQNTYLQVLESDSFKEKFDQLLRDYVGRPSPLYLAKRLSEKYGCKIYLKREDLNHTGAHKINNTIGQILLARRMGKSRIIAETGAGQHGVATATVCALMNMECIVYMGKTDVERQHANVQKMEMLGATVVPVTSGNMTLKDATNEAIRDWCCHPSDTYYIIGSTVGPHPYPDMVARLQSVISEEIKKQLLEKEGRDHPDYLIACVGGGSNAAGTIYHFVDDERVKIVLAEAGGKGIHSGMSAATIQLGKEGIIHGARTLVMQNEDGQIEEPYSVSAGLDYPGIGPIHANLSVKHRAQILAVDDDEALEAAFELTRLEGIIPALESAHALGALAKVNFKPEEVVVLTVSGRGDKDMDTYINYKLS.

Position 90 is an N6-(pyridoxal phosphate)lysine (lysine 90).

The protein belongs to the TrpB family. As to quaternary structure, tetramer of two alpha and two beta chains. Requires pyridoxal 5'-phosphate as cofactor.

The enzyme catalyses (1S,2R)-1-C-(indol-3-yl)glycerol 3-phosphate + L-serine = D-glyceraldehyde 3-phosphate + L-tryptophan + H2O. It functions in the pathway amino-acid biosynthesis; L-tryptophan biosynthesis; L-tryptophan from chorismate: step 5/5. The beta subunit is responsible for the synthesis of L-tryptophan from indole and L-serine. This is Tryptophan synthase beta chain from Parabacteroides distasonis (strain ATCC 8503 / DSM 20701 / CIP 104284 / JCM 5825 / NCTC 11152).